The chain runs to 200 residues: Methylamine utilization protein MauD (200 aa).

The chain crosses the membrane as a helical span at residues 4–24; sequence FLIASNILLWLAFLGVTVVML. In terms of domain architecture, Thioredoxin spans 49–183; the sequence is PDIGDAAPEF…LESLLEADRT (135 aa).

Its subcellular location is the membrane. The protein operates within one-carbon metabolism; methylamine degradation. Functionally, may be specifically involved in the processing, transport, and/or maturation of the MADH beta-subunit. In Paracoccus denitrificans, this protein is Methylamine utilization protein MauD (mauD).